We begin with the raw amino-acid sequence, 360 residues long: Peptide chain release factor 1 (360 aa).

Gln235 is subject to N5-methylglutamine. The interval 285 to 313 (KRQQAEASTRRNLLGSGDRSDRNRTYNFP) is disordered.

Belongs to the prokaryotic/mitochondrial release factor family. Post-translationally, methylated by PrmC. Methylation increases the termination efficiency of RF1.

It is found in the cytoplasm. In terms of biological role, peptide chain release factor 1 directs the termination of translation in response to the peptide chain termination codons UAG and UAA. The protein is Peptide chain release factor 1 of Shigella boydii serotype 18 (strain CDC 3083-94 / BS512).